Reading from the N-terminus, the 523-residue chain is Xanthotoxin 5-hydroxylase CYP82C2 (523 aa).

The chain crosses the membrane as a helical span at residues 1–21 (MDTSLFSLFVPILVFVFIALF). Cys-462 serves as a coordination point for heme.

The protein belongs to the cytochrome P450 family. Heme is required as a cofactor.

It localises to the membrane. It carries out the reaction xanthotoxin + reduced [NADPH--hemoprotein reductase] + O2 = 5-hydroxyxanthotoxin + oxidized [NADPH--hemoprotein reductase] + H2O + 2 H(+). The catalysed reaction is indole-3-carbonyl nitrile + reduced [NADPH--hemoprotein reductase] + O2 = 4-hydroxy-indole-3-carbonyl nitrile + oxidized [NADPH--hemoprotein reductase] + H2O + H(+). Involved in the biosynthetic pathway to 4-hydroxyindole-3-carbonyl nitrile (4-OH-ICN), a cyanogenic metabolite required for inducible pathogen defense. Converts indole-3-carbonyl nitrile (ICN) into 4-OH-ICN. Can hydroxylate xanthotoxin (8-methoxypsoralen) to form 5-hydroxyxanthotoxin (5-hydroxy-8-methoxypsoralen) in vivo and in vitro. This chain is Xanthotoxin 5-hydroxylase CYP82C2, found in Arabidopsis thaliana (Mouse-ear cress).